A 1142-amino-acid polypeptide reads, in one-letter code: Coiled-coil domain-containing protein 40 (1142 aa).

Disordered regions lie at residues 1–197 and 251–274; these read MAEP…QVLP and PSTEEGAMAERVESEGSDEEAEDE. Basic and acidic residues-rich tracts occupy residues 11–27 and 35–55; these read SHPEDGSASEGEKEGNN and PEKDDGQKGEEAVGSTEHPEE. Positions 63 to 96 are enriched in acidic residues; sequence AIEEGEVETEGEAAVEGEEEAVSYGDAESEEEYY. At Ser252 the chain carries Phosphoserine. Acidic residues predominate over residues 265–274; sequence EGSDEEAEDE. Coiled-coil stretches lie at residues 293 to 319, 349 to 470, 526 to 627, 684 to 950, and 1005 to 1054; these read AALKNYLNRQIEKLKLDLQELVVATKQ, HDRH…QAED, QAKS…LRRK, TSSR…LGQL, and VRKA…LTRL.

It belongs to the CCDC40 family.

The protein localises to the cytoplasm. It localises to the cell projection. The protein resides in the cilium. Functionally, required for assembly of dynein regulatory complex (DRC) and inner dynein arm (IDA) complexes, which are responsible for ciliary beat regulation, thereby playing a central role in motility in cilia and flagella. Probably acts together with CCDC39 to form a molecular ruler that determines the 96 nanometer (nm) repeat length and arrangements of components in cilia and flagella. Not required for outer dynein arm complexes assembly. Required for axonemal recruitment of CCDC39. This is Coiled-coil domain-containing protein 40 from Homo sapiens (Human).